A 600-amino-acid chain; its full sequence is Calcium/calmodulin-dependent serine/threonine-protein kinase 1 (600 aa).

Positions 1–99 (MGLCHGKSAA…GGFKRPFPPP (99 aa)) are disordered. The span at 24–56 (TRVAEAAAAPAKPASPAPSAAAAAAAPAKPGTP) shows a compositional bias: low complexity. Polar residues predominate over residues 74 to 85 (YKGSPANSSVAS). Positions 147–409 (YELGREVGRG…AAQALCHPWI (263 aa)) constitute a Protein kinase domain. Residues 153-161 (VGRGHFGYT) and K179 each bind ATP. D275 (proton acceptor) is an active-site residue.

This sequence belongs to the protein kinase superfamily. Ser/Thr protein kinase family. Autophosphorylated. In terms of tissue distribution, highly expressed in roots in the zone of cell division. Expressed in leaf mesophyll cells and at lower levels in mature stems.

The enzyme catalyses L-seryl-[protein] + ATP = O-phospho-L-seryl-[protein] + ADP + H(+). It catalyses the reaction L-threonyl-[protein] + ATP = O-phospho-L-threonyl-[protein] + ADP + H(+). Activated by the binding of calmodulin-like protein 1 (CML1) in the presence of Ca(2+). Possesses kinase activity in vitro. The sequence is that of Calcium/calmodulin-dependent serine/threonine-protein kinase 1 (CAMK1) from Oryza sativa subsp. japonica (Rice).